The primary structure comprises 263 residues: Peptide methionine sulfoxide reductase A4, chloroplastic (263 aa).

A chloroplast-targeting transit peptide spans 1–75 (MPPLLASTSS…GLGGLGGSPR (75 aa)).

The protein belongs to the MsrA Met sulfoxide reductase family. In terms of tissue distribution, expressed in roots, stems, leaves and flowers.

Its subcellular location is the plastid. It is found in the chloroplast. The enzyme catalyses L-methionyl-[protein] + [thioredoxin]-disulfide + H2O = L-methionyl-(S)-S-oxide-[protein] + [thioredoxin]-dithiol. The catalysed reaction is [thioredoxin]-disulfide + L-methionine + H2O = L-methionine (S)-S-oxide + [thioredoxin]-dithiol. Its function is as follows. Catalyzes the reduction of methionine sulfoxide (MetSO) to methionine in proteins. Involved in abiotic and salt stress responses. Plays a protective role against oxidative stress by restoring activity to proteins that have been inactivated by methionine oxidation. MSRA family specifically reduces the MetSO S-enantiomer. In Oryza sativa subsp. japonica (Rice), this protein is Peptide methionine sulfoxide reductase A4, chloroplastic.